A 354-amino-acid polypeptide reads, in one-letter code: Fructose-bisphosphate aldolase 2 (354 aa).

Residue Ser-50 participates in D-glyceraldehyde 3-phosphate binding. The active-site Proton donor is Asp-83. The Zn(2+) site is built by His-84, Asp-105, Glu-142, and His-198. Gly-199 contacts dihydroxyacetone phosphate. His-232 is a binding site for Zn(2+). Dihydroxyacetone phosphate-binding positions include 233 to 235 (GSS) and 275 to 278 (NIDT).

Belongs to the class II fructose-bisphosphate aldolase family. Homodimer. It depends on Zn(2+) as a cofactor.

The catalysed reaction is beta-D-fructose 1,6-bisphosphate = D-glyceraldehyde 3-phosphate + dihydroxyacetone phosphate. Its pathway is carbohydrate biosynthesis; Calvin cycle. It functions in the pathway carbohydrate degradation; glycolysis; D-glyceraldehyde 3-phosphate and glycerone phosphate from D-glucose: step 4/4. Functionally, catalyzes the aldol condensation of dihydroxyacetone phosphate (DHAP or glycerone-phosphate) with glyceraldehyde 3-phosphate (G3P) to form fructose 1,6-bisphosphate (FBP) in gluconeogenesis and the reverse reaction in glycolysis. The chain is Fructose-bisphosphate aldolase 2 (cfxB) from Cereibacter sphaeroides (Rhodobacter sphaeroides).